The following is a 298-amino-acid chain: 4-hydroxy-tetrahydrodipicolinate synthase (298 aa).

Threonine 51 contributes to the pyruvate binding site. Tyrosine 139 acts as the Proton donor/acceptor in catalysis. Lysine 167 (schiff-base intermediate with substrate) is an active-site residue. Residue isoleucine 209 coordinates pyruvate.

Belongs to the DapA family. In terms of assembly, homotetramer; dimer of dimers.

The protein localises to the cytoplasm. The enzyme catalyses L-aspartate 4-semialdehyde + pyruvate = (2S,4S)-4-hydroxy-2,3,4,5-tetrahydrodipicolinate + H2O + H(+). It functions in the pathway amino-acid biosynthesis; L-lysine biosynthesis via DAP pathway; (S)-tetrahydrodipicolinate from L-aspartate: step 3/4. Functionally, catalyzes the condensation of (S)-aspartate-beta-semialdehyde [(S)-ASA] and pyruvate to 4-hydroxy-tetrahydrodipicolinate (HTPA). The sequence is that of 4-hydroxy-tetrahydrodipicolinate synthase from Haemophilus influenzae (strain ATCC 51907 / DSM 11121 / KW20 / Rd).